The primary structure comprises 481 residues: Proline--tRNA ligase (481 aa).

The protein belongs to the class-II aminoacyl-tRNA synthetase family. ProS type 3 subfamily. As to quaternary structure, homodimer.

It localises to the cytoplasm. The enzyme catalyses tRNA(Pro) + L-proline + ATP = L-prolyl-tRNA(Pro) + AMP + diphosphate. Catalyzes the attachment of proline to tRNA(Pro) in a two-step reaction: proline is first activated by ATP to form Pro-AMP and then transferred to the acceptor end of tRNA(Pro). The polypeptide is Proline--tRNA ligase (Chlorobium phaeovibrioides (strain DSM 265 / 1930) (Prosthecochloris vibrioformis (strain DSM 265))).